The chain runs to 478 residues: MSGNAESTAYRSALEVIGAVEPRVANAIRAELTDQRESLKLIASENYASPATLLAMGNWFSDKYAEGTVGRRFYAGCQNVDTVEALAAEHARELFGAPYAYVQPHSGIDANLVAFWAVLADRIESPALRRAQARHVNDLTEADWFALRRELGNQRMLGMSLDAGGHLTHGFRPNISGKMFDQRSYGTDPETGLIDYDGVAEAAREFKPLILLGGYSAYPRKVNFRILREIADSVGATFMVDMAHFAGLVAGKAFTGDFDPVPHAHIVTSTTHKSLRGPRGGLVLCGPELAEQVDRGCPMVLGGPLPQVMAAKAVALAEARRPDFVDYAGRIVANAQALADGLQRRGAQLVTGGTDNHLALIDVTGYGLTGRQAEHALLDSGIVTNRNAIPQDPNGAWYTSGIRVGTPALTTRGLGTAELDATAELIHTVLSHTAPGTNADGTSSKAKYVLDPAVADRVGKQASDLLTGFPLYPAIDLG.

Residues Leu161 and 165–167 (GHL) contribute to the (6S)-5,6,7,8-tetrahydrofolate site. Lys273 carries the N6-(pyridoxal phosphate)lysine modification. Glu291 contacts (6S)-5,6,7,8-tetrahydrofolate.

This sequence belongs to the SHMT family. Homodimer. Requires pyridoxal 5'-phosphate as cofactor.

It localises to the cytoplasm. It catalyses the reaction (6R)-5,10-methylene-5,6,7,8-tetrahydrofolate + glycine + H2O = (6S)-5,6,7,8-tetrahydrofolate + L-serine. The protein operates within one-carbon metabolism; tetrahydrofolate interconversion. It functions in the pathway amino-acid biosynthesis; glycine biosynthesis; glycine from L-serine: step 1/1. Its function is as follows. Catalyzes the reversible interconversion of serine and glycine with tetrahydrofolate (THF) serving as the one-carbon carrier. This reaction serves as the major source of one-carbon groups required for the biosynthesis of purines, thymidylate, methionine, and other important biomolecules. Also exhibits THF-independent aldolase activity toward beta-hydroxyamino acids, producing glycine and aldehydes, via a retro-aldol mechanism. This chain is Serine hydroxymethyltransferase, found in Salinispora tropica (strain ATCC BAA-916 / DSM 44818 / JCM 13857 / NBRC 105044 / CNB-440).